Here is a 67-residue protein sequence, read N- to C-terminus: Small ribosomal subunit protein eS31 (67 aa).

Positions 31, 34, 49, and 52 each coordinate Zn(2+). The C4-type zinc finger occupies cysteine 31–cysteine 52.

Belongs to the eukaryotic ribosomal protein eS31 family. In terms of assembly, part of the 30S ribosomal subunit. Zn(2+) serves as cofactor.

This is Small ribosomal subunit protein eS31 from Methanococcus maripaludis (strain DSM 14266 / JCM 13030 / NBRC 101832 / S2 / LL).